The following is a 367-amino-acid chain: Lipoyl synthase 2, chloroplastic (367 aa).

[4Fe-4S] cluster contacts are provided by Cys-84, Cys-89, Cys-95, Cys-121, Cys-125, Cys-128, and Ser-336. In terms of domain architecture, Radical SAM core spans 104 to 325; sequence GEGDGIATAT…KEYGESVGFR (222 aa).

This sequence belongs to the radical SAM superfamily. Lipoyl synthase family. [4Fe-4S] cluster serves as cofactor.

It localises to the plastid. Its subcellular location is the chloroplast. It catalyses the reaction [[Fe-S] cluster scaffold protein carrying a second [4Fe-4S](2+) cluster] + N(6)-octanoyl-L-lysyl-[protein] + 2 oxidized [2Fe-2S]-[ferredoxin] + 2 S-adenosyl-L-methionine + 4 H(+) = [[Fe-S] cluster scaffold protein] + N(6)-[(R)-dihydrolipoyl]-L-lysyl-[protein] + 4 Fe(3+) + 2 hydrogen sulfide + 2 5'-deoxyadenosine + 2 L-methionine + 2 reduced [2Fe-2S]-[ferredoxin]. It functions in the pathway protein modification; protein lipoylation via endogenous pathway; protein N(6)-(lipoyl)lysine from octanoyl-[acyl-carrier-protein]: step 2/2. Functionally, catalyzes the radical-mediated insertion of two sulfur atoms into the C-6 and C-8 positions of the octanoyl moiety bound to the lipoyl domains of lipoate-dependent enzymes, thereby converting the octanoylated domains into lipoylated derivatives. In Zea mays (Maize), this protein is Lipoyl synthase 2, chloroplastic.